The primary structure comprises 290 residues: Small ribosomal subunit biogenesis GTPase RsgA (290 aa).

The region spanning 62 to 213 (KNSLVRPPIV…IADTPGFSSL (152 aa)) is the CP-type G domain. Residues 111–114 (SKTD) and 156–164 (GQTGVGKTT) contribute to the GTP site. The Zn(2+) site is built by C237, C242, H244, and C250.

This sequence belongs to the TRAFAC class YlqF/YawG GTPase family. RsgA subfamily. In terms of assembly, monomer. Associates with 30S ribosomal subunit, binds 16S rRNA. Zn(2+) is required as a cofactor.

The protein resides in the cytoplasm. One of several proteins that assist in the late maturation steps of the functional core of the 30S ribosomal subunit. Helps release RbfA from mature subunits. May play a role in the assembly of ribosomal proteins into the subunit. Circularly permuted GTPase that catalyzes slow GTP hydrolysis, GTPase activity is stimulated by the 30S ribosomal subunit. This Streptococcus mutans serotype c (strain ATCC 700610 / UA159) protein is Small ribosomal subunit biogenesis GTPase RsgA.